The following is a 98-amino-acid chain: Cell division protein FtsB (98 aa).

The Cytoplasmic portion of the chain corresponds to 1–3 (MKR). A helical transmembrane segment spans residues 4-21 (LLIVLIALLAMLEYRLWF). Topologically, residues 22 to 98 (GDKSLAESFH…GGERDKPSND (77 aa)) are periplasmic. Residues 31 to 74 (HLQEQIKLQQQSNAQLVARNQILREEISDLRSGTEALEERARNE) adopt a coiled-coil conformation.

The protein belongs to the FtsB family. Part of a complex composed of FtsB, FtsL and FtsQ.

The protein localises to the cell inner membrane. In terms of biological role, essential cell division protein. May link together the upstream cell division proteins, which are predominantly cytoplasmic, with the downstream cell division proteins, which are predominantly periplasmic. The sequence is that of Cell division protein FtsB from Shewanella halifaxensis (strain HAW-EB4).